Reading from the N-terminus, the 247-residue chain is Protein IRON-RELATED TRANSCRIPTION FACTOR 2 (247 aa).

The Nuclear localization signal signature appears at 68–75; that stretch reads HRKLSHNA. The tract at residues 68 to 81 is basic motif; sequence HRKLSHNAYERDRR. Residues 68-119 form the bHLH domain; sequence HRKLSHNAYERDRRKQLNELYSSLRALLPDADHTKLSIPTTVSRVLKYIPEL. Positions 82-119 are helix-loop-helix motif; the sequence is KQLNELYSSLRALLPDADHTKLSIPTTVSRVLKYIPEL.

It belongs to the bHLH protein family. As to quaternary structure, forms homodimers. Interacts with BHLH156 in the nucleus. In terms of tissue distribution, expressed constitutively at low levels in the roots. Also observed in flowers, developing seeds, embryos and vascular bundles.

The protein localises to the nucleus. It is found in the cytoplasm. Transcription activator that binds to the DNA motif 5'-CACGTGG-3' in the promoter of iron (Fe) deficiency-inducible genes as well as of genes involved in iron homeostasis, thus contributing to basal tolerance to iron deficiency, iron uptake from soil and iron transport, particularly during seed maturation and germination. Promotes the accumulation of mugineic acid family phytosiderophores (MAs). Required for ethylene-mediated signaling during iron deficiency responses. Improves growth and yield, especially in calcareous soil with low iron availability. Promotes iron concentration in shoots and grain. The chain is Protein IRON-RELATED TRANSCRIPTION FACTOR 2 from Oryza sativa subsp. japonica (Rice).